The sequence spans 1023 residues: Cell division cycle-associated protein 2 (1023 aa).

Positions 1-14 are enriched in basic and acidic residues; it reads MDANSKDKPPETKE. Positions 1-21 are disordered; that stretch reads MDANSKDKPPETKESAMNNAG. 7 positions are modified to phosphoserine: serine 98, serine 120, serine 126, serine 131, serine 210, serine 291, and serine 309. At threonine 312 the chain carries Phosphothreonine. In terms of domain architecture, PP1-binding spans 389 to 449; sequence KRKRVTFGED…PEPLPQPDFD (61 aa). A phosphoserine mark is found at serine 400 and serine 407. Threonine 412 is modified (phosphothreonine). Serine 437 is subject to Phosphoserine. The interval 542–580 is disordered; the sequence is SQETKCTKRALPKKSQVLKSCRKKKGKGKKSVQKSLYGE. Basic residues predominate over residues 561–573; it reads SCRKKKGKGKKSV. Phosphoserine is present on residues serine 591 and serine 614. Residues 667 to 729 form a disordered region; it reads SSLGNATSDE…ERVASDSPKP (63 aa). Residues 679–691 are compositionally biased toward low complexity; it reads NTNIMNINENKNI. The span at 696–706 shows a compositional bias: basic and acidic residues; the sequence is NKSESENEPKA. Phosphoserine occurs at positions 710 and 756. Lysine 762 is covalently cross-linked (Glycyl lysine isopeptide (Lys-Gly) (interchain with G-Cter in SUMO2)). The span at 803–816 shows a compositional bias: basic and acidic residues; the sequence is ESKSQSEDLGRKPM. Disordered regions lie at residues 803–860 and 936–1023; these read ESKS…GSSV and SPIK…ERKQ. Phosphoserine is present on residues serine 936 and serine 977. 2 stretches are compositionally biased toward polar residues: residues 979-992 and 1000-1010; these read CIST…TSQF and SLNGKGESSLT. Serine 1000 is modified (phosphoserine). Residues 1013 to 1023 are compositionally biased toward basic and acidic residues; sequence ERIEHNGERKQ.

In terms of assembly, interacts with PPP1CC. In terms of processing, phosphorylated by CDK1. May regulate its subcellular location. In terms of tissue distribution, ubiquitously expressed.

Its subcellular location is the nucleus. Functionally, regulator of chromosome structure during mitosis required for condensin-depleted chromosomes to retain their compact architecture through anaphase. Acts by mediating the recruitment of phopsphatase PP1-gamma subunit (PPP1CC) to chromatin at anaphase and into the following interphase. At anaphase onset, its association with chromatin targets a pool of PPP1CC to dephosphorylate substrates. The chain is Cell division cycle-associated protein 2 (CDCA2) from Homo sapiens (Human).